Consider the following 349-residue polypeptide: Hydroxymethylglutaryl-CoA synthase (349 aa).

(3S)-3-hydroxy-3-methylglutaryl-CoA-binding residues include Asp-30 and Ala-31. The active-site Proton donor/acceptor is Glu-82. (3S)-3-hydroxy-3-methylglutaryl-CoA contacts are provided by Cys-114 and Thr-155. The active-site Acyl-thioester intermediate is Cys-114. Arg-203 contributes to the CoA binding site. (3S)-3-hydroxy-3-methylglutaryl-CoA contacts are provided by Thr-205 and His-238. Catalysis depends on His-238, which acts as the Proton donor/acceptor. Lys-243 is a CoA binding site. Asn-270 and Ser-300 together coordinate (3S)-3-hydroxy-3-methylglutaryl-CoA.

This sequence belongs to the thiolase-like superfamily. Archaeal HMG-CoA synthase family. Interacts with acetoacetyl-CoA thiolase that catalyzes the precedent step in the pathway and with a DUF35 protein. The acetoacetyl-CoA thiolase/HMG-CoA synthase complex channels the intermediate via a fused CoA-binding site, which allows for efficient coupling of the endergonic thiolase reaction with the exergonic HMGCS reaction.

It carries out the reaction acetoacetyl-CoA + acetyl-CoA + H2O = (3S)-3-hydroxy-3-methylglutaryl-CoA + CoA + H(+). Its pathway is metabolic intermediate biosynthesis; (R)-mevalonate biosynthesis; (R)-mevalonate from acetyl-CoA: step 2/3. In terms of biological role, catalyzes the condensation of acetyl-CoA with acetoacetyl-CoA to form 3-hydroxy-3-methylglutaryl-CoA (HMG-CoA). Functions in the mevalonate (MVA) pathway leading to isopentenyl diphosphate (IPP), a key precursor for the biosynthesis of isoprenoid compounds that are building blocks of archaeal membrane lipids. This Methanococcus maripaludis (strain C5 / ATCC BAA-1333) protein is Hydroxymethylglutaryl-CoA synthase.